A 250-amino-acid polypeptide reads, in one-letter code: Ubiquinone/menaquinone biosynthesis C-methyltransferase UbiE (250 aa).

Residues Ser73, Asp94, and 122–123 each bind S-adenosyl-L-methionine; that span reads NA.

The protein belongs to the class I-like SAM-binding methyltransferase superfamily. MenG/UbiE family.

The enzyme catalyses a 2-demethylmenaquinol + S-adenosyl-L-methionine = a menaquinol + S-adenosyl-L-homocysteine + H(+). It carries out the reaction a 2-methoxy-6-(all-trans-polyprenyl)benzene-1,4-diol + S-adenosyl-L-methionine = a 5-methoxy-2-methyl-3-(all-trans-polyprenyl)benzene-1,4-diol + S-adenosyl-L-homocysteine + H(+). It functions in the pathway quinol/quinone metabolism; menaquinone biosynthesis; menaquinol from 1,4-dihydroxy-2-naphthoate: step 2/2. The protein operates within cofactor biosynthesis; ubiquinone biosynthesis. Its function is as follows. Methyltransferase required for the conversion of demethylmenaquinol (DMKH2) to menaquinol (MKH2) and the conversion of 2-polyprenyl-6-methoxy-1,4-benzoquinol (DDMQH2) to 2-polyprenyl-3-methyl-6-methoxy-1,4-benzoquinol (DMQH2). This is Ubiquinone/menaquinone biosynthesis C-methyltransferase UbiE from Legionella pneumophila (strain Lens).